Consider the following 327-residue polypeptide: Biotin synthase (327 aa).

The Radical SAM core domain maps to 44–273 (FMGNKFDTCS…NAFLRFSGGR (230 aa)). [4Fe-4S] cluster contacts are provided by cysteine 62, cysteine 66, and cysteine 69. Residues cysteine 138, cysteine 198, and arginine 268 each contribute to the [2Fe-2S] cluster site.

The protein belongs to the radical SAM superfamily. Biotin synthase family. In terms of assembly, homodimer. [4Fe-4S] cluster serves as cofactor. It depends on [2Fe-2S] cluster as a cofactor.

It catalyses the reaction (4R,5S)-dethiobiotin + (sulfur carrier)-SH + 2 reduced [2Fe-2S]-[ferredoxin] + 2 S-adenosyl-L-methionine = (sulfur carrier)-H + biotin + 2 5'-deoxyadenosine + 2 L-methionine + 2 oxidized [2Fe-2S]-[ferredoxin]. It participates in cofactor biosynthesis; biotin biosynthesis; biotin from 7,8-diaminononanoate: step 2/2. Functionally, catalyzes the conversion of dethiobiotin (DTB) to biotin by the insertion of a sulfur atom into dethiobiotin via a radical-based mechanism. This Parabacteroides distasonis (strain ATCC 8503 / DSM 20701 / CIP 104284 / JCM 5825 / NCTC 11152) protein is Biotin synthase.